The primary structure comprises 354 residues: Rhodopsin (354 aa).

The Extracellular portion of the chain corresponds to 1–36; it reads MNGTEGPNFYVPMSNKTGIVRSPFEYPQYYLAEPWK. N-linked (GlcNAc...) asparagine glycans are attached at residues asparagine 2 and asparagine 15. The helical transmembrane segment at 37-61 threads the bilayer; it reads YSVLAAYMFLLILLGLPINFMTLYV. Residues 62-73 lie on the Cytoplasmic side of the membrane; sequence TIQHKKLRTPLN. Residues 74–96 traverse the membrane as a helical segment; sequence YILLNLAFANHFMVLCGFTITMY. At 97–110 the chain is on the extracellular side; that stretch reads TSLHGYFVFGQTGC. Cysteine 110 and cysteine 187 are disulfide-bonded. Residues 111–133 traverse the membrane as a helical segment; that stretch reads YFEGFFATLGGEIALWSLVVLAI. Positions 134–136 match the 'Ionic lock' involved in activated form stabilization motif; sequence ERY. The Cytoplasmic portion of the chain corresponds to 134–152; that stretch reads ERYIVVCKPMSNFRFGENH. A helical membrane pass occupies residues 153-173; the sequence is AMMGVAFTWIMALACAVPPLF. The Extracellular portion of the chain corresponds to 174-202; sequence GWSRYIPEGMQCSCGVDYYTLKPEVNNES. Residues 203-224 form a helical membrane-spanning segment; sequence FVIYMFVVHFLIPLIIISFCYG. Residues 225–252 lie on the Cytoplasmic side of the membrane; the sequence is RLVCTVKEAAAQQQESATTQKAEKEVTR. A helical membrane pass occupies residues 253–274; sequence MVVIMVIFFLICWVPYAYVAFY. Topologically, residues 275–286 are extracellular; the sequence is IFTHQGSEFGPI. Residues 287-308 form a helical membrane-spanning segment; sequence FMTVPAFFAKSSAIYNPVIYIM. The residue at position 296 (lysine 296) is an N6-(retinylidene)lysine. Topologically, residues 309 to 354 are cytoplasmic; the sequence is LNKQFRNCMITTLCCGKNPFGDEDASSAATSKTEATSVSTSQVSPA. 2 S-palmitoyl cysteine lipidation sites follow: cysteine 322 and cysteine 323. The segment at 331 to 354 is disordered; the sequence is EDASSAATSKTEATSVSTSQVSPA. The span at 334–354 shows a compositional bias: low complexity; the sequence is SSAATSKTEATSVSTSQVSPA.

Belongs to the G-protein coupled receptor 1 family. Opsin subfamily. Contains one covalently linked retinal chromophore. Upon light absorption, the covalently bound 11-cis-retinal is converted to all-trans-retinal. After hydrolysis of the Schiff base and release of the covalently bound all-trans-retinal, active rhodopsin is regenerated by binding of a fresh molecule of 11-cis-retinal. As to expression, retina. Localized in the ventral part of the retina.

It is found in the membrane. The protein localises to the cell projection. It localises to the cilium. Its subcellular location is the photoreceptor outer segment. Photoreceptor required for image-forming vision at low light intensity. Required for photoreceptor cell viability after birth. May use a mixture of retinal and 3-dehydroretinal as visual pigment. Light-induced isomerization of 11-cis to all-trans retinal triggers a conformational change that activates signaling via G-proteins. Subsequent receptor phosphorylation mediates displacement of the bound G-protein alpha subunit by arrestin and terminates signaling. In Aquarana catesbeiana (American bullfrog), this protein is Rhodopsin (RHO).